The following is a 125-amino-acid chain: Small ribosomal subunit protein eS6 (125 aa).

It belongs to the eukaryotic ribosomal protein eS6 family.

The polypeptide is Small ribosomal subunit protein eS6 (Thermococcus onnurineus (strain NA1)).